The chain runs to 388 residues: Outer membrane protein assembly factor BamB (388 aa).

Positions 1-21 are cleaved as a signal peptide; sequence MILGWTQRIFTLLVVVTLLAA. C22 is lipidated: N-palmitoyl cysteine. The S-diacylglycerol cysteine moiety is linked to residue C22.

The protein belongs to the BamB family. As to quaternary structure, part of the Bam complex.

It is found in the cell outer membrane. Its function is as follows. Part of the outer membrane protein assembly complex, which is involved in assembly and insertion of beta-barrel proteins into the outer membrane. The sequence is that of Outer membrane protein assembly factor BamB from Kangiella koreensis (strain DSM 16069 / JCM 12317 / KCTC 12182 / SW-125).